The chain runs to 565 residues: Thiol:disulfide interchange protein DsbD (565 aa).

The signal sequence occupies residues Met1–Ala19. Disulfide bonds link Cys122–Cys128 and Cys182–Cys304. Helical transmembrane passes span Leu163–Val183, Leu208–Val228, Tyr243–Phe263, Ile296–Ile316, Trp323–Ile343, Phe365–Trp385, and Gly386–Leu406. Residues Trp434–Pro565 form the Thioredoxin domain. Cys480 and Cys483 are joined by a disulfide.

This sequence belongs to the thioredoxin family. DsbD subfamily.

It is found in the cell inner membrane. The enzyme catalyses [protein]-dithiol + NAD(+) = [protein]-disulfide + NADH + H(+). It carries out the reaction [protein]-dithiol + NADP(+) = [protein]-disulfide + NADPH + H(+). In terms of biological role, required to facilitate the formation of correct disulfide bonds in some periplasmic proteins and for the assembly of the periplasmic c-type cytochromes. Acts by transferring electrons from cytoplasmic thioredoxin to the periplasm. This transfer involves a cascade of disulfide bond formation and reduction steps. The chain is Thiol:disulfide interchange protein DsbD from Shigella dysenteriae serotype 1 (strain Sd197).